The sequence spans 428 residues: Adenylosuccinate synthetase (428 aa).

GTP-binding positions include 12-18 (GDEGKGK) and 40-42 (GHT). The active-site Proton acceptor is the aspartate 13. The Mg(2+) site is built by aspartate 13 and glycine 40. IMP contacts are provided by residues 13–16 (DEGK), 38–41 (NAGH), threonine 128, arginine 142, glutamine 223, threonine 238, and arginine 302. Histidine 41 functions as the Proton donor in the catalytic mechanism. Residue 298-304 (VTTKRPR) coordinates substrate. GTP-binding positions include arginine 304, 330–332 (KLD), and 412–414 (GVG).

The protein belongs to the adenylosuccinate synthetase family. Homodimer. Mg(2+) serves as cofactor.

The protein resides in the cytoplasm. It catalyses the reaction IMP + L-aspartate + GTP = N(6)-(1,2-dicarboxyethyl)-AMP + GDP + phosphate + 2 H(+). Its pathway is purine metabolism; AMP biosynthesis via de novo pathway; AMP from IMP: step 1/2. Functionally, plays an important role in the de novo pathway of purine nucleotide biosynthesis. Catalyzes the first committed step in the biosynthesis of AMP from IMP. This is Adenylosuccinate synthetase from Cutibacterium acnes (strain DSM 16379 / KPA171202) (Propionibacterium acnes).